The sequence spans 202 residues: Small ribosomal subunit protein uS4c (202 aa).

Residues 90 to 159 (MRLDNIIFRL…TKNYEFSQTY (70 aa)) enclose the S4 RNA-binding domain.

The protein belongs to the universal ribosomal protein uS4 family. Part of the 30S ribosomal subunit. Contacts protein S5. The interaction surface between S4 and S5 is involved in control of translational fidelity.

The protein resides in the plastid. The protein localises to the chloroplast. In terms of biological role, one of the primary rRNA binding proteins, it binds directly to 16S rRNA where it nucleates assembly of the body of the 30S subunit. Its function is as follows. With S5 and S12 plays an important role in translational accuracy. This is Small ribosomal subunit protein uS4c (rps4) from Huperzia lucidula (Shining clubmoss).